The sequence spans 252 residues: Adenosylcobinamide-GDP ribazoletransferase (252 aa).

A run of 6 helical transmembrane segments spans residues 29–49, 50–70, 104–124, 129–149, 166–186, and 194–214; these read LYWF…LGYV, GSLS…GIVL, VGSF…VAVV, FGLF…QVLL, FVAG…LALL, and FPTM…VGMV.

This sequence belongs to the CobS family. Mg(2+) serves as cofactor.

The protein resides in the cell inner membrane. It carries out the reaction alpha-ribazole + adenosylcob(III)inamide-GDP = adenosylcob(III)alamin + GMP + H(+). The enzyme catalyses alpha-ribazole 5'-phosphate + adenosylcob(III)inamide-GDP = adenosylcob(III)alamin 5'-phosphate + GMP + H(+). The protein operates within cofactor biosynthesis; adenosylcobalamin biosynthesis; adenosylcobalamin from cob(II)yrinate a,c-diamide: step 7/7. Its function is as follows. Joins adenosylcobinamide-GDP and alpha-ribazole to generate adenosylcobalamin (Ado-cobalamin). Also synthesizes adenosylcobalamin 5'-phosphate from adenosylcobinamide-GDP and alpha-ribazole 5'-phosphate. This chain is Adenosylcobinamide-GDP ribazoletransferase, found in Chlorobium chlorochromatii (strain CaD3).